We begin with the raw amino-acid sequence, 588 residues long: MNNSINHKFHHISRAEYQELLAVSRGDAVADYIIDNVSILDLINGGEISGPIVIKGRYIAGVGAEYADAPALQRIDARGATAVPGFIDAHLHIESSMMTPVTFETATLPRGLTTVICDPHEIVNVMGEAGFAWFARCAEQARQNQYLQVSSCVPALEGCDVNGASFTLEQMLAWRDHPQVTGLAEMMDYSGVISGQNALLDKLDAFRHLTLDGHCPGLGGKELNAYITAGIENCHESYQLEEGRRKLQLGMSLMIREGSAARNLNALAPLINEFNSPQCMLCTDDRNPWEIAHEGHIDALIRRLIEQHNVPLHVAYRVASWSTARHFGLNHLGLLAPGKQADIVLLSDARKVTVQQVLVKGEPIDAQTLQAEESARLAQSAPPYGNTIARQPVSASDFALQFTPGKRYRVIDVIHNELITHSHSSVYSENGFDRDDVSFIAVLERYGQRLAPACGLLGGFGLNEGALAATVSHDSHNIVVIGRSAEEMALAVNQVIQDGGGLCVVRNGQVQSHLPLPIAGLMSTDTAQLLAEQIDALKAAARECGPLPDEPFIQMAFLSLPVIPALKLTSQGLFDGEKFAFTTLEVTE.

It belongs to the metallo-dependent hydrolases superfamily. Adenine deaminase family. In terms of assembly, homodimer. The cofactor is Mn(2+).

It catalyses the reaction adenine + H2O + H(+) = hypoxanthine + NH4(+). The polypeptide is Adenine deaminase (Escherichia coli O139:H28 (strain E24377A / ETEC)).